Consider the following 112-residue polypeptide: Transmembrane protein 14 homolog (112 aa).

4 helical membrane-spanning segments follow: residues 9-26, 36-53, 60-77, and 87-109; these read FKLNAAMAAIVLSGGVIG, LIAGSVFGLLYSTSAYYL, VGLGVSVLASSLLGGVMG, and IPIILATGSAFTLLSSGKELYNI.

This sequence belongs to the TMEM14 family.

It is found in the membrane. The chain is Transmembrane protein 14 homolog from Dictyostelium discoideum (Social amoeba).